We begin with the raw amino-acid sequence, 357 residues long: Crh-like protein 1 (357 aa).

The signal sequence occupies residues Met-1 to Ala-17. The 201-residue stretch at Tyr-20 to Glu-220 folds into the GH16 domain. Asn-52 and Asn-92 each carry an N-linked (GlcNAc...) asparagine glycan. The Nucleophile role is filled by Glu-109. Glu-113 functions as the Proton donor in the catalytic mechanism. Position 113 (Glu-113) interacts with chitin. The N-linked (GlcNAc...) asparagine glycan is linked to Asn-131. 3 residues coordinate chitin: Lys-193, Trp-197, and Thr-208. 2 N-linked (GlcNAc...) asparagine glycosylation sites follow: Asn-242 and Asn-257. A lipid anchor (GPI-anchor amidated glycine) is attached at Gly-326. A propeptide spans Ser-327–Phe-357 (removed in mature form). A helical membrane pass occupies residues Val-337–Phe-357.

Belongs to the glycosyl hydrolase 16 family. CRH1 subfamily. In terms of processing, the GPI-like anchor contains a phosphoceramide lipid group. The anchor position has not been determined.

The protein localises to the cell membrane. The protein resides in the secreted. It is found in the cell wall. It catalyses the reaction Random endo-hydrolysis of N-acetyl-beta-D-glucosaminide (1-&gt;4)-beta-linkages in chitin and chitodextrins.. Dual chitinase/transglycosylase that plays a role in cell wall architecture. Chitinase and transglycosylase activities are coupled. Required for the polysaccharide cross-linking at the septa and the cell wall. More specifically, transfers chitin to 1,6-beta-glucan in the cell wall. This is Crh-like protein 1 from Aspergillus fumigatus (strain ATCC MYA-4609 / CBS 101355 / FGSC A1100 / Af293) (Neosartorya fumigata).